The primary structure comprises 959 residues: Oxysterol-binding protein-related protein 6 (959 aa).

The interval 1–60 is disordered; the sequence is MSSDEKGISPAHKTSTPTHRSASSSTSSQRESRQSIHVLERTASSSTEPSVSRQLLEPEP. S2 carries the post-translational modification N-acetylserine. Residues 14–29 show a composition bias toward low complexity; that stretch reads TSTPTHRSASSSTSSQ. The span at 30 to 40 shows a compositional bias: basic and acidic residues; the sequence is RESRQSIHVLE. A Phosphoserine modification is found at S35. A compositionally biased stretch (polar residues) spans 42–53; the sequence is TASSSTEPSVSR. The 96-residue stretch at 86–181 folds into the PH domain; the sequence is PDRHEGFMLK…WVSKLRHHRL (96 aa). S190 and S290 each carry phosphoserine.

It belongs to the OSBP family. In terms of assembly, homodimer. Interacts with OSBPL3. As to expression, expressed in skin, respiratory epithelium, small intestine epithelium, pancreas, striated muscle, brain, spinal ganglia, and nervous plexus of the intestine (at protein level). In the brain, specifically in the cerebellum, it is expressed in Purkinje and granule cells. Expressed in hepatocytes and macrophages.

The protein localises to the nucleus envelope. It localises to the cytoplasm. It is found in the cytosol. The protein resides in the endoplasmic reticulum membrane. Its subcellular location is the cell membrane. The protein localises to the endosome membrane. Its function is as follows. Regulates cellular transport and efflux of cholesterol. Plays a role in phosphatidylinositol-4-phophate (PI4P) turnover at the neuronal membrane. Binds via its PH domain PI4P, phosphatidylinositol-4,5-diphosphate, phosphatidylinositol-3,4,5-triphosphate, and phosphatidic acid. Weakly binds 25-hydroxycholesterol. The polypeptide is Oxysterol-binding protein-related protein 6 (Osbpl6) (Mus musculus (Mouse)).